Consider the following 232-residue polypeptide: 6-phosphogluconolactonase (232 aa).

It belongs to the glucosamine/galactosamine-6-phosphate isomerase family. 6-phosphogluconolactonase subfamily.

The enzyme catalyses 6-phospho-D-glucono-1,5-lactone + H2O = 6-phospho-D-gluconate + H(+). Its pathway is carbohydrate degradation; pentose phosphate pathway; D-ribulose 5-phosphate from D-glucose 6-phosphate (oxidative stage): step 2/3. Hydrolysis of 6-phosphogluconolactone to 6-phosphogluconate. The chain is 6-phosphogluconolactonase (pgl) from Caulobacter vibrioides (strain ATCC 19089 / CIP 103742 / CB 15) (Caulobacter crescentus).